Here is a 131-residue protein sequence, read N- to C-terminus: Small ribosomal subunit protein eS17 (131 aa).

This sequence belongs to the eukaryotic ribosomal protein eS17 family.

The protein is Small ribosomal subunit protein eS17 (RpS17) of Drosophila melanogaster (Fruit fly).